The primary structure comprises 952 residues: Meiosis-specific coiled-coil domain-containing protein MEIOC (952 aa).

Disordered regions lie at residues 1–23, 609–629, and 933–952; these read MEVR…EGLE, QAKP…LDGL, and VHES…TNKH. Residues 617 to 627 show a composition bias toward basic and acidic residues; sequence YDPEEGPKHLD. Positions 936-952 are enriched in polar residues; the sequence is SINSSNPMNQRGETNKH.

Interacts with YTHDC2; binds transcript that regulate the mitotic cell cycle inhibiting progression into metaphase, thereby allowing meiotic prophase to proceed normally. Interacts with RBM46. Expressed in fetal ovaries. Expressed in testis.

The protein resides in the cytoplasm. It localises to the nucleus. Functionally, is required for meiosis completion in both male and female germ cells. Confers stability to numerous meiotic mRNAs in gonads allowing proper initiation and progression into meiosis prophase I. The function may involve YTHDC2 and is independent of induction by retinoic acid (RA). Maintains an extended meiotic prophase I by properly promoting the transition from a mitotic to a meiotic cell cycle program by binding transcripts through its interaction with YTHDC2 that regulate the mitotic cell cycle. The protein is Meiosis-specific coiled-coil domain-containing protein MEIOC of Homo sapiens (Human).